Consider the following 506-residue polypeptide: Glucosidase 2 subunit beta (506 aa).

Residues 1 to 23 (MKFSQWYTLTAPLLISSLYTVNA) form the signal peptide. Cysteines 86 and 108 form a disulfide. Coiled coils occupy residues 172-243 (SLVA…LYET) and 338-374 (ESYR…LEYH). The 196-residue stretch at 279–474 (ESCNNHLSML…KMKSPAACSP (196 aa)) folds into the MRH domain. Disulfide bonds link cysteine 431-cysteine 460 and cysteine 445-cysteine 472. Positions 503 to 506 (VDEL) match the ER retrieval sequence motif.

In terms of assembly, heterodimer of a catalytic subunit alpha (gls2) and a subunit beta (gtb1).

Its subcellular location is the endoplasmic reticulum. Its function is as follows. Subunit of glucosidase 2, which cleaves sequentially the 2 innermost alpha-1,3-linked glucose residues from the Glc(2)Man(9)GlcNAc(2) oligosaccharide precursor of immature glycoproteins in the endoplasmic reticulum (ER). Specifically required for the cleavage of the final glucose. The subunit beta retains the catalytic subunit alpha in the ER. This is Glucosidase 2 subunit beta (gtb1) from Schizosaccharomyces pombe (strain 972 / ATCC 24843) (Fission yeast).